A 422-amino-acid chain; its full sequence is Synaptotagmin-15 (422 aa).

The Extracellular segment spans residues 1–4 (MAEQ). The chain crosses the membrane as a helical; Signal-anchor for type III membrane protein span at residues 5–27 (LALVIGCIIGGLLLLIGISCCLW). Residues 28 to 422 (KRLCTTFTYE…WHALCRPMEP (395 aa)) are Cytoplasmic-facing. 2 consecutive C2 domains span residues 148 to 267 (CLGR…VIWR) and 279 to 400 (EFGD…EHWN).

It belongs to the synaptotagmin family. In terms of assembly, homodimer.

Its subcellular location is the membrane. May be involved in the trafficking and exocytosis of secretory vesicles in non-neuronal tissues. This is Synaptotagmin-15 (Syt15) from Rattus norvegicus (Rat).